The sequence spans 467 residues: Neuromedin-K receptor (467 aa).

At 1–86 (MDSFAAAETW…TNQFVQPSWR (86 aa)) the chain is on the extracellular side. Asparagine 23, asparagine 50, and asparagine 75 each carry an N-linked (GlcNAc...) asparagine glycan. A helical membrane pass occupies residues 87–109 (IALWSLAYGVVVAVAVFGNLIVI). Over 110–119 (WIILAHKRMR) the chain is Cytoplasmic. The helical transmembrane segment at 120–141 (TVTNYFLVNLAFSDASMAAFNT) threads the bilayer. Residues 142-161 (LVNFIYALHSEWYFGANYCR) are Extracellular-facing. The cysteines at positions 160 and 235 are disulfide-linked. The helical transmembrane segment at 162 to 183 (FQNFFPITAVFASIYSMTAIAV) threads the bilayer. Residues 184–203 (DRYMAIIDPLKPRLSATATK) are Cytoplasmic-facing. The helical transmembrane segment at 204 to 224 (IVIGSIWILAFLLALPQCLYS) threads the bilayer. The Extracellular portion of the chain corresponds to 225-247 (KTKVMPGRTLCYVQWPEGPKQHF). The chain crosses the membrane as a helical span at residues 248–272 (IYHIIVIILVYCFPLLIMGITYTIV). The Cytoplasmic segment spans residues 273–301 (GITLWGGEIPGDTCDKYHEQLKAKRKVVK). Residues 302–323 (MMIIVVVTFAICWLPYHIYFIL) traverse the membrane as a helical segment. Topologically, residues 324 to 336 (TAIYQQLNRWKYI) are extracellular. A helical membrane pass occupies residues 337–361 (QQVYLASFWLAMSSTMYNPIIYCCL). At 362–467 (NKRFRAGFKR…SPYTSMEEYS (106 aa)) the chain is on the cytoplasmic side. The S-palmitoyl cysteine moiety is linked to residue cysteine 376. A disordered region spans residues 416-467 (DPSDADNTRSSRKKRATPGDPNFNGCSRRNSKSASTTSSFISSPYTSMEEYS). Residues 447 to 467 (KSASTTSSFISSPYTSMEEYS) are compositionally biased toward low complexity.

Belongs to the G-protein coupled receptor 1 family.

Its subcellular location is the cell membrane. This is a receptor for the tachykinin neuropeptide neuromedin-K (neurokinin B). It is associated with G proteins that activate a phosphatidylinositol-calcium second messenger system. This is Neuromedin-K receptor (TACR3) from Oryctolagus cuniculus (Rabbit).